Consider the following 130-residue polypeptide: Sulfurtransferase TusD (130 aa).

C78 serves as the catalytic Cysteine persulfide intermediate.

This sequence belongs to the DsrE/TusD family. As to quaternary structure, heterohexamer, formed by a dimer of trimers. The hexameric TusBCD complex contains 2 copies each of TusB, TusC and TusD. The TusBCD complex interacts with TusE.

It localises to the cytoplasm. Functionally, part of a sulfur-relay system required for 2-thiolation of 5-methylaminomethyl-2-thiouridine (mnm(5)s(2)U) at tRNA wobble positions. Accepts sulfur from TusA and transfers it in turn to TusE. The polypeptide is Sulfurtransferase TusD (Buchnera aphidicola subsp. Baizongia pistaciae (strain Bp)).